Reading from the N-terminus, the 320-residue chain is Malate dehydrogenase (320 aa).

NAD(+) contacts are provided by residues G10–G15 and D34. R83 and R89 together coordinate substrate. Residues N96 and I119–N121 contribute to the NAD(+) site. Substrate is bound by residues N121 and R152. H176 serves as the catalytic Proton acceptor.

The protein belongs to the LDH/MDH superfamily. MDH type 3 family.

It catalyses the reaction (S)-malate + NAD(+) = oxaloacetate + NADH + H(+). Its function is as follows. Catalyzes the reversible oxidation of malate to oxaloacetate. This chain is Malate dehydrogenase, found in Roseobacter denitrificans (strain ATCC 33942 / OCh 114) (Erythrobacter sp. (strain OCh 114)).